Here is a 239-residue protein sequence, read N- to C-terminus: Major centromere autoantigen B (239 aa).

The interval 28-185 (AGFGGGPNAT…DDEVPVPSFG (158 aa)) is disordered. Phosphothreonine is present on residues T37 and T39. Composition is skewed to acidic residues over residues 46–117 (GEEE…EAED) and 148–179 (GEED…DDEV). Positions 176–239 (DDEVPVPSFG…AGARGLGHQS (64 aa)) are homodimerization.

Antiparallel homodimer. Interacts with CENPT. Identified in a centromere complex containing histones H2A, H2B and H4, and at least CENPA, CENPB, CENPC, CENPT, CENPN, HJURP, SUPT16H, SSRP1 and RSF1. Poly-ADP-ribosylated by PARP1. Post-translationally, N-terminally methylated by METTL11A/NTM1. Alpha-N-methylation is stimulated in response extracellular stimuli, including increased cell density and heat shock, and seems to facilitate binding to CENP-B boxes. Chromatin-bound CENP-B is primarily trimethylated.

The protein resides in the nucleus. It is found in the chromosome. It localises to the centromere. In terms of biological role, interacts with centromeric heterochromatin in chromosomes and binds to a specific 17 bp subset of alphoid satellite DNA, called the CENP-B box. May organize arrays of centromere satellite DNA into a higher-order structure which then directs centromere formation and kinetochore assembly in mammalian chromosomes. The sequence is that of Major centromere autoantigen B (CENPB) from Ovis aries (Sheep).